A 161-amino-acid polypeptide reads, in one-letter code: Nucleotide-binding protein Mmc1_1670 (161 aa).

It belongs to the YajQ family.

Functionally, nucleotide-binding protein. This is Nucleotide-binding protein Mmc1_1670 from Magnetococcus marinus (strain ATCC BAA-1437 / JCM 17883 / MC-1).